The primary structure comprises 621 residues: Auxin response factor 13 (621 aa).

Positions 124-228 (FSKILTASDV…ELRFGIRRAK (105 aa)) form a DNA-binding region, TF-B3. The 93-residue stretch at 508 to 600 (RSRIKVHMQG…EIKKMKLKNK (93 aa)) folds into the PB1 domain.

It belongs to the ARF family. Homodimers and heterodimers.

It localises to the nucleus. Auxin response factors (ARFs) are transcriptional factors that bind specifically to the DNA sequence 5'-TGTCTC-3' found in the auxin-responsive promoter elements (AuxREs). Could act as transcriptional activator or repressor. Formation of heterodimers with Aux/IAA proteins may alter their ability to modulate early auxin response genes expression. The sequence is that of Auxin response factor 13 (ARF13) from Arabidopsis thaliana (Mouse-ear cress).